A 102-amino-acid chain; its full sequence is Large ribosomal subunit protein eL21 (102 aa).

The segment covering 1-21 (MVRRSKGFRSRTRKKLRKKPR) has biased composition (basic residues). A disordered region spans residues 1–33 (MVRRSKGFRSRTRKKLRKKPRERGLSPLGPMTQ).

The protein belongs to the eukaryotic ribosomal protein eL21 family.

The sequence is that of Large ribosomal subunit protein eL21 from Methanopyrus kandleri (strain AV19 / DSM 6324 / JCM 9639 / NBRC 100938).